A 365-amino-acid polypeptide reads, in one-letter code: Poly(rC)-binding protein 2 (365 aa).

KH domains follow at residues 13–75 and 97–162; these read TLTI…FAMI and PVTL…VKQI. Residue K115 forms a Glycyl lysine isopeptide (Lys-Gly) (interchain with G-Cter in SUMO2) linkage. A Phosphoserine modification is found at S173. K185 participates in a covalent cross-link: Glycyl lysine isopeptide (Lys-Gly) (interchain with G-Cter in SUMO2). Phosphoserine is present on residues S189 and S272. The 65-residue stretch at 287–351 folds into the KH 3 domain; that stretch reads TTSHELTIPN…ASISLAQYLI (65 aa). K322 participates in a covalent cross-link: Glycyl lysine isopeptide (Lys-Gly) (interchain with G-Cter in SUMO2). Phosphoserine occurs at positions 364 and 365.

As to quaternary structure, identified in a mRNP complex, at least composed of DHX9, DDX3X, ELAVL1, HNRNPU, IGF2BP1, ILF3, PABPC1, PCBP2, PTBP2, STAU1, STAU2, SYNCRIP and YBX1. Interacts with IFIH1 and RNF135. Interacts with MAVS (via C-terminus) and ITCH (via WW domains). Interacts with CGAS; preventing the formation of liquid-like droplets in which CGAS is activated. Phosphorylated. The non-phosphorylated form(s) exhibited the strongest poly(rC)-binding activity. In terms of processing, (Microbial infection) Proteolytically cleaved by picornavirus proteinase 3CD. Detected in all tissues examined.

The protein resides in the nucleus. It is found in the cytoplasm. Functionally, single-stranded nucleic acid binding protein that binds preferentially to oligo dC. Major cellular poly(rC)-binding protein. Also binds poly(rU). Acts as a negative regulator of antiviral signaling. Negatively regulates cellular antiviral responses mediated by MAVS signaling. It acts as an adapter between MAVS and the E3 ubiquitin ligase ITCH, therefore triggering MAVS ubiquitination and degradation. Negativeley regulates the cGAS-STING pathway via interaction with CGAS, preventing the formation of liquid-like droplets in which CGAS is activated. Together with PCBP1, required for erythropoiesis, possibly by regulating mRNA splicing. (Microbial infection) In case of infection by poliovirus, binds to the viral internal ribosome entry site (IRES) and stimulates the IRES-mediated translation. Also plays a role in initiation of viral RNA replication in concert with the viral protein 3CD. This is Poly(rC)-binding protein 2 from Homo sapiens (Human).